A 348-amino-acid chain; its full sequence is Lysophosphatidic acid receptor 2 (348 aa).

The Extracellular portion of the chain corresponds to 1–30; sequence MGQCYYNETIGFFYNNSGKELSSHWRPKDV. N-linked (GlcNAc...) asparagine glycans are attached at residues Asn-7 and Asn-15. The chain crosses the membrane as a helical span at residues 31 to 51; the sequence is VVVALGLTVSVLVLLTNLLVI. Residues 52–66 are Cytoplasmic-facing; that stretch reads AAIASNRRFHQPIYY. The helical transmembrane segment at 67 to 87 threads the bilayer; it reads LLGNLAAADLFAGVAYLFLMF. Over 88 to 100 the chain is Extracellular; it reads HTGPRTARLSLEG. Residues 101 to 123 traverse the membrane as a helical segment; it reads WFLRQGLLDTSLTASVATLLAIA. Topologically, residues 124 to 143 are cytoplasmic; that stretch reads VERHRSVMAVQLHSRLPRGR. The helical transmembrane segment at 144–164 threads the bilayer; it reads VVMLIVGVWVAALGLGLLPAH. The Extracellular segment spans residues 165 to 185; the sequence is SWHCLCALDRCSRMAPLLSRS. Residues 186–206 traverse the membrane as a helical segment; it reads YLAVWALSSLLVFLLMVAVYT. Residues 207 to 239 lie on the Cytoplasmic side of the membrane; sequence RIFFYVRRRVQRMAEHVSCHPRYRETTLSLVKT. The chain crosses the membrane as a helical span at residues 240 to 260; that stretch reads VVIILGAFVVCWTPGQVVLLL. Topologically, residues 261 to 276 are extracellular; sequence DGLGCESCNVLAVEKY. The helical transmembrane segment at 277-294 threads the bilayer; it reads FLLLAEANSLVNAAVYSC. Residues 295–348 lie on the Cytoplasmic side of the membrane; it reads RDAEMRRTFRRLLCCACLRQSTRESVHYTSSAQGGASTRIMLPENGHPLMDSTL. A lipid anchor (S-palmitoyl cysteine) is attached at Cys-308. The short motif at 345-348 is the PDZ-binding element; the sequence is DSTL.

The protein belongs to the G-protein coupled receptor 1 family. As to quaternary structure, interacts with SLC9A3R2/NHERF2, MAGI3 and PLCB3. Interacts with RALA and GRK2. Expressed most abundantly in testes and peripheral blood leukocytes with less expression in pancreas, spleen, thymus and prostate. Little or no expression in heart, brain, placenta, lung, liver, skeletal muscle, kidney, ovary, small intestine, or colon.

It localises to the cell surface. Its subcellular location is the cell membrane. Its function is as follows. Receptor for lysophosphatidic acid (LPA), a mediator of diverse cellular activities. Seems to be coupled to the G(i)/G(o), G(12)/G(13), and G(q) families of heteromeric G proteins. Plays a key role in phospholipase C-beta (PLC-beta) signaling pathway. Stimulates phospholipase C (PLC) activity in a manner that is independent of RALA activation. This is Lysophosphatidic acid receptor 2 from Homo sapiens (Human).